A 468-amino-acid polypeptide reads, in one-letter code: Ubiquitin carboxyl-terminal hydrolase 17-like protein B (468 aa).

The tract at residues 1–20 (MVVALSFPEADPAMSPPSAP) is disordered. The USP domain maps to 51–348 (CGLQNTGNSC…NAYVLFYVQQ (298 aa)). The Nucleophile role is filled by Cys60. The active-site Proton acceptor is His307. The disordered stretch occupies residues 374–449 (KKSGEKKHNK…GGQNLRNTEG (76 aa)). The span at 394 to 403 (CENREKRSSK) shows a compositional bias: basic and acidic residues. The span at 422–434 (GQKQENTKLTPQE) shows a compositional bias: polar residues.

This sequence belongs to the peptidase C19 family. USP17 subfamily. Post-translationally, ubiquitinated. Detected in brain, heart, liver, lung, kidney, ovary and spleen.

It catalyses the reaction Thiol-dependent hydrolysis of ester, thioester, amide, peptide and isopeptide bonds formed by the C-terminal Gly of ubiquitin (a 76-residue protein attached to proteins as an intracellular targeting signal).. Its activity is regulated as follows. Inhibited by ubiquitin aldehyde. Deubiquitinating enzyme that removes conjugated ubiquitin from specific proteins to regulate different cellular processes. The protein is Ubiquitin carboxyl-terminal hydrolase 17-like protein B of Mus musculus (Mouse).